Consider the following 572-residue polypeptide: DBH-like monooxygenase protein 2 homolog (572 aa).

The signal sequence occupies residues 1-26 (MGTCLKGNMSVLSLVLFLLSVQQFWA). N-linked (GlcNAc...) asparagine glycans are attached at residues asparagine 8, asparagine 64, asparagine 187, and asparagine 203. Topologically, residues 27–552 (QEDPLLPFSE…SPPEPCVRAC (526 aa)) are extracellular. A DOMON domain is found at 42 to 157 (HNVQLKWGFD…LPMKLIYAYG (116 aa)). Residue tyrosine 207 is part of the active site. 2 disulfide bridges follow: cysteine 209/cysteine 256 and cysteine 244/cysteine 263. Positions 237 and 238 each coordinate Cu cation. Cu cation is bound at residue histidine 301. Residue asparagine 306 is glycosylated (N-linked (GlcNAc...) asparagine). Intrachain disulfides connect cysteine 358–cysteine 472 and cysteine 435–cysteine 457. The active site involves histidine 381. Cu cation-binding residues include histidine 381, histidine 383, and methionine 456. N-linked (GlcNAc...) asparagine glycans are attached at residues asparagine 468, asparagine 503, asparagine 518, and asparagine 534. Residues 553–571 (ATKNLAFMSLFLCLAGMWA) form a helical membrane-spanning segment. Serine 572 is a topological domain (cytoplasmic).

The protein belongs to the copper type II ascorbate-dependent monooxygenase family. It depends on Cu(2+) as a cofactor.

Its subcellular location is the membrane. The polypeptide is DBH-like monooxygenase protein 2 homolog (moxd2) (Danio rerio (Zebrafish)).